The following is a 516-amino-acid chain: Putative protein NRT1/ PTR FAMILY 2.2 (516 aa).

A run of 11 helical transmembrane segments spans residues 31–51 (TLLG…VFLI), 67–87 (IVNG…DSFF), 90–110 (IPVI…LTMI), 138–158 (ILYI…FTLA), 174–194 (FFNW…TAIV), 201–221 (SWKL…IVFV), 320–340 (LLLA…LIIL), 362–382 (VIVI…VYPM), 394–414 (LQKV…SAIV), 437–457 (FIAS…ITLI), and 476–496 (VYWL…AWFY).

The protein belongs to the major facilitator superfamily. Proton-dependent oligopeptide transporter (POT/PTR) (TC 2.A.17) family. Not detected.

It is found in the membrane. In terms of biological role, transporter involved in a passive nitrate efflux. This Arabidopsis thaliana (Mouse-ear cress) protein is Putative protein NRT1/ PTR FAMILY 2.2 (NPF2.2).